The following is a 213-amino-acid chain: Orotate phosphoribosyltransferase (213 aa).

Lysine 26 provides a ligand contact to 5-phospho-alpha-D-ribose 1-diphosphate. 34-35 (FF) is an orotate binding site. Residues 72–73 (YK), arginine 99, lysine 100, lysine 103, histidine 105, and 124–132 (DDVITAGTA) contribute to the 5-phospho-alpha-D-ribose 1-diphosphate site. 2 residues coordinate orotate: threonine 128 and arginine 156.

This sequence belongs to the purine/pyrimidine phosphoribosyltransferase family. PyrE subfamily. As to quaternary structure, homodimer. The cofactor is Mg(2+).

It catalyses the reaction orotidine 5'-phosphate + diphosphate = orotate + 5-phospho-alpha-D-ribose 1-diphosphate. The protein operates within pyrimidine metabolism; UMP biosynthesis via de novo pathway; UMP from orotate: step 1/2. In terms of biological role, catalyzes the transfer of a ribosyl phosphate group from 5-phosphoribose 1-diphosphate to orotate, leading to the formation of orotidine monophosphate (OMP). In Shigella flexneri, this protein is Orotate phosphoribosyltransferase.